Reading from the N-terminus, the 365-residue chain is UBX domain-containing protein 2B (365 aa).

Positions 1 to 97 (MADGGASPAQ…MSDDKENQRF (97 aa)) are disordered. Composition is skewed to basic and acidic residues over residues 50–63 (DEAK…DKPT) and 73–95 (LKID…KENQ). Residues 175–240 (DVQILLKLWR…MEDHQEQEYV (66 aa)) enclose the SEP domain. A UBX domain is found at 286 to 363 (DSVPATKIQI…DILNTVILQQ (78 aa)).

This sequence belongs to the NSFL1C family.

It is found in the nucleus. It localises to the cytoplasm. Its subcellular location is the cytosol. The protein resides in the endoplasmic reticulum. The protein localises to the golgi apparatus. It is found in the cytoskeleton. It localises to the microtubule organizing center. Its subcellular location is the centrosome. Functionally, adapter protein required for Golgi and endoplasmic reticulum biogenesis. Involved in Golgi and endoplasmic reticulum maintenance during interphase and in their reassembly at the end of mitosis. Regulates the centrosomal levels of kinase AURKA/Aurora A during mitotic progression by promoting AURKA removal from centrosomes in prophase. Also, regulates spindle orientation during mitosis. This Gallus gallus (Chicken) protein is UBX domain-containing protein 2B (UBXN2B).